A 535-amino-acid polypeptide reads, in one-letter code: Cytochrome P450 monooxygenase BOA7 (535 aa).

A helical transmembrane segment spans residues 20 to 37 (SIFLILGFFVLAAILIAW). N-linked (GlcNAc...) asparagine glycosylation is found at N65, N148, N180, and N420. C478 is a heme binding site.

This sequence belongs to the cytochrome P450 family. Heme serves as cofactor.

Its subcellular location is the membrane. The protein operates within polyketide biosynthesis. Cytochrome P450 monooxygenase; part of the gene cluster B that mediates the biosynthesis of botcinic acid and its botcinin derivatives, acetate-derived polyketides that contribute to virulence when combined with the sesquiterpene botrydial. Botcinic acid and its derivatives have been shown to induce chlorosis and necrosis during host plant infection, but also have antifungal activities. Two polyketide synthases, BOA6 and BOA9, are involved in the biosynthesis of botcinins. BOA6 mediates the formation of the per-methylated tetraketide core by condensation of four units of malonyl-CoA with one unit of acetyl-CoA, which would be methylated in activated methylene groups to yield a bicyclic acid intermediate that could then either be converted to botrylactone derivatives or lose the starter acetate unit through a retro-Claisen type C-C bond cleavage to yield botcinin derivatives. The second polyketide synthase, BOA9, is probably required for the biosynthesis of the tetraketide side chain of botcinins. The methyltransferase (MT) domain within BOA6 is probably responsible for the incorporation of four methyl groups. The trans-enoyl reductase BOA5 might take over the enoyl reductase function of BOA6 that misses an ER domain. The monooxygenases BOA2, BOA3 and BOA4 might be involved in further hydroxylations at C4, C5 and C8, whereas BOA7, close to BOA9, could potentially be involved in the hydroxylation at C4 in the side chain of botcinins. In Botryotinia fuckeliana (strain B05.10) (Noble rot fungus), this protein is Cytochrome P450 monooxygenase BOA7.